A 351-amino-acid polypeptide reads, in one-letter code: MSITIKLGQLAEFLGATLRGDKDKDITGLATLEEAGPGQISFLAKPQYRKYLVDTQAAAVLLKPADADGYTGDALLVPDPYLAYARISHFFDPKPKSSAGVHPTAVIAEDAQVDPAASIGAFAVIESGARIAANVTIGAHCFIGARSEIGEGGWLAPRVTLYHDVRIGKRVVIQSGAVLGGEGFGFVNDKGVWQKFAQIGGVTLGDDVEIGVNTAIDRGALSDTRIGNGVKLDNQIHIAHNVQIGDHTAMAACVGISGSAKIGKHCMLAGGVGLVGHIDICDGVYITGMTMVTHSITEPGSYSSGTAMQPSAEWRKSAARLRKIDDMARRLQKLEKAVETVTCADNRSSDG.

His-240 serves as the catalytic Proton acceptor.

The protein belongs to the transferase hexapeptide repeat family. LpxD subfamily. In terms of assembly, homotrimer.

The enzyme catalyses a UDP-3-O-[(3R)-3-hydroxyacyl]-alpha-D-glucosamine + a (3R)-hydroxyacyl-[ACP] = a UDP-2-N,3-O-bis[(3R)-3-hydroxyacyl]-alpha-D-glucosamine + holo-[ACP] + H(+). It functions in the pathway bacterial outer membrane biogenesis; LPS lipid A biosynthesis. Catalyzes the N-acylation of UDP-3-O-acylglucosamine using 3-hydroxyacyl-ACP as the acyl donor. Is involved in the biosynthesis of lipid A, a phosphorylated glycolipid that anchors the lipopolysaccharide to the outer membrane of the cell. This is UDP-3-O-acylglucosamine N-acyltransferase from Pseudomonas syringae pv. tomato (strain ATCC BAA-871 / DC3000).